A 155-amino-acid polypeptide reads, in one-letter code: Aspartate carbamoyltransferase regulatory chain (155 aa).

Cys110, Cys115, Cys139, and Cys142 together coordinate Zn(2+).

The protein belongs to the PyrI family. As to quaternary structure, contains catalytic and regulatory chains. Requires Zn(2+) as cofactor.

In terms of biological role, involved in allosteric regulation of aspartate carbamoyltransferase. This chain is Aspartate carbamoyltransferase regulatory chain, found in Yersinia pestis bv. Antiqua (strain Antiqua).